Here is a 47-residue protein sequence, read N- to C-terminus: Lysis protein for colicin E9 (47 aa).

The signal sequence occupies residues 1-19; it reads MKKITGIILLLLAAIILAA. Cysteine 20 carries N-palmitoyl cysteine lipidation. Cysteine 20 is lipidated: S-diacylglycerol cysteine.

It localises to the cell outer membrane. Its function is as follows. Lysis proteins are required for both colicin release and partial cell lysis. In Escherichia coli, this protein is Lysis protein for colicin E9 (lys).